Consider the following 184-residue polypeptide: LPS-assembly lipoprotein LptE (184 aa).

The N-terminal stretch at 1 to 19 (MRHRLFTLVLGLAVLITAG) is a signal peptide. Cys20 is lipidated: N-palmitoyl cysteine. Cys20 is lipidated: S-diacylglycerol cysteine.

It belongs to the LptE lipoprotein family. In terms of assembly, component of the lipopolysaccharide transport and assembly complex. Interacts with LptD.

The protein localises to the cell outer membrane. Functionally, together with LptD, is involved in the assembly of lipopolysaccharide (LPS) at the surface of the outer membrane. Required for the proper assembly of LptD. Binds LPS and may serve as the LPS recognition site at the outer membrane. The chain is LPS-assembly lipoprotein LptE from Pectobacterium atrosepticum (strain SCRI 1043 / ATCC BAA-672) (Erwinia carotovora subsp. atroseptica).